Consider the following 263-residue polypeptide: Pyridoxine 5'-phosphate synthase (263 aa).

N15 is a binding site for 3-amino-2-oxopropyl phosphate. 1-deoxy-D-xylulose 5-phosphate is bound at residue D17 to H18. A 3-amino-2-oxopropyl phosphate-binding site is contributed by R26. H51 (proton acceptor) is an active-site residue. 1-deoxy-D-xylulose 5-phosphate is bound by residues R53 and H58. Residue E78 is the Proton acceptor of the active site. 1-deoxy-D-xylulose 5-phosphate is bound at residue T108. H199 (proton donor) is an active-site residue. 3-amino-2-oxopropyl phosphate is bound by residues G200 and G221 to H222.

Belongs to the PNP synthase family. As to quaternary structure, homooctamer; tetramer of dimers.

Its subcellular location is the cytoplasm. The enzyme catalyses 3-amino-2-oxopropyl phosphate + 1-deoxy-D-xylulose 5-phosphate = pyridoxine 5'-phosphate + phosphate + 2 H2O + H(+). It functions in the pathway cofactor biosynthesis; pyridoxine 5'-phosphate biosynthesis; pyridoxine 5'-phosphate from D-erythrose 4-phosphate: step 5/5. In terms of biological role, catalyzes the complicated ring closure reaction between the two acyclic compounds 1-deoxy-D-xylulose-5-phosphate (DXP) and 3-amino-2-oxopropyl phosphate (1-amino-acetone-3-phosphate or AAP) to form pyridoxine 5'-phosphate (PNP) and inorganic phosphate. This Ralstonia nicotianae (strain ATCC BAA-1114 / GMI1000) (Ralstonia solanacearum) protein is Pyridoxine 5'-phosphate synthase.